We begin with the raw amino-acid sequence, 520 residues long: Glutamate decarboxylase-like protein FG08083 (520 aa).

86 to 88 (KLV) lines the substrate pocket. The residue at position 300 (lysine 300) is an N6-(pyridoxal phosphate)lysine. The disordered stretch occupies residues 338–357 (KNGVSSEQSANTNGSEKESW). The segment covering 340-351 (GVSSEQSANTNG) has biased composition (polar residues). Arginine 492 contacts substrate.

This sequence belongs to the group II decarboxylase family. Pyridoxal 5'-phosphate is required as a cofactor.

It functions in the pathway mycotoxin biosynthesis. Glutamate decarboxylase-like protein; part of the gene cluster that mediates the biosynthesis of butenolide, a mycotoxin that shows antibiotic activity but does not seem to play a major role in the spread of head blight in wheat. Butenolide is derived from glutamic acid via a 4-acetamido-2-butenoic acid intermediate. The predicted function of the NADH:flavin oxidoreductase FG08077, the cytochrome P450 monooxygenase FG08079, the decarboxylase FG08083, and the putative acetyltransferase FG08082 are consistent with this pathway, however, the respective activities of the butelonide biosynthesis cluster enzymes have still to be experimentally determined. This is Glutamate decarboxylase-like protein FG08083 from Gibberella zeae (strain ATCC MYA-4620 / CBS 123657 / FGSC 9075 / NRRL 31084 / PH-1) (Wheat head blight fungus).